The primary structure comprises 336 residues: Adenylosuccinate synthetase (336 aa).

GTP is bound by residues 12-18 and 42-44; these read GDEGKGK and GHS. The active-site Proton acceptor is aspartate 13. 2 residues coordinate Mg(2+): aspartate 13 and glycine 42. Residues 13–16, 40–43, threonine 127, arginine 141, glutamine 179, threonine 194, and arginine 256 each bind IMP; these read DEGK and NAGH. The active-site Proton donor is the histidine 43. 252-258 is a binding site for substrate; the sequence is TVTGRRR. GTP contacts are provided by residues arginine 258, 284–286, and 324–326; these read CLD and STG.

It belongs to the adenylosuccinate synthetase family. In terms of assembly, homodimer. It depends on Mg(2+) as a cofactor.

The protein localises to the cytoplasm. It catalyses the reaction IMP + L-aspartate + GTP = N(6)-(1,2-dicarboxyethyl)-AMP + GDP + phosphate + 2 H(+). Its pathway is purine metabolism; AMP biosynthesis via de novo pathway; AMP from IMP: step 1/2. Its function is as follows. Plays an important role in the de novo pathway of purine nucleotide biosynthesis. Catalyzes the first committed step in the biosynthesis of AMP from IMP. This Methanococcus aeolicus (strain ATCC BAA-1280 / DSM 17508 / OCM 812 / Nankai-3) protein is Adenylosuccinate synthetase.